The chain runs to 154 residues: Ribosome maturation factor RimP (154 aa).

Belongs to the RimP family.

Its subcellular location is the cytoplasm. Required for maturation of 30S ribosomal subunits. This Hydrogenobaculum sp. (strain Y04AAS1) protein is Ribosome maturation factor RimP.